The sequence spans 341 residues: Phosphate acyltransferase (341 aa).

The protein belongs to the PlsX family. Homodimer. Probably interacts with PlsY.

It is found in the cytoplasm. It carries out the reaction a fatty acyl-[ACP] + phosphate = an acyl phosphate + holo-[ACP]. It participates in lipid metabolism; phospholipid metabolism. Functionally, catalyzes the reversible formation of acyl-phosphate (acyl-PO(4)) from acyl-[acyl-carrier-protein] (acyl-ACP). This enzyme utilizes acyl-ACP as fatty acyl donor, but not acyl-CoA. This is Phosphate acyltransferase from Lacticaseibacillus casei (strain BL23) (Lactobacillus casei).